Here is a 354-residue protein sequence, read N- to C-terminus: Neutral protease 2 homolog AN7962 (354 aa).

Positions 1 to 19 (MKFIAPIALLGMFQAASAS) are cleaved as a signal peptide. A propeptide spanning residues 20–178 (PVDIKTSNAG…GAQLSKLSKR (159 aa)) is cleaved from the precursor. Cystine bridges form between cysteine 184–cysteine 255 and cysteine 262–cysteine 280. Histidine 305 is a binding site for Zn(2+). Residue glutamate 306 is part of the active site. 2 residues coordinate Zn(2+): histidine 309 and aspartate 320.

The protein belongs to the peptidase M35 family. It depends on Zn(2+) as a cofactor.

Its subcellular location is the secreted. It catalyses the reaction Preferential cleavage of bonds with hydrophobic residues in P1'. Also 3-Asn-|-Gln-4 and 8-Gly-|-Ser-9 bonds in insulin B chain.. Its function is as follows. Secreted metalloproteinase that allows assimilation of proteinaceous substrates. Shows high activities on basic nuclear substrates such as histone and protamine. In Emericella nidulans (strain FGSC A4 / ATCC 38163 / CBS 112.46 / NRRL 194 / M139) (Aspergillus nidulans), this protein is Neutral protease 2 homolog AN7962.